A 233-amino-acid polypeptide reads, in one-letter code: Hydroxyacylglutathione hydrolase (233 aa).

Residues histidine 52, histidine 54, aspartate 56, histidine 57, histidine 108, aspartate 125, and histidine 163 each coordinate Zn(2+).

The protein belongs to the metallo-beta-lactamase superfamily. Glyoxalase II family. In terms of assembly, monomer. Zn(2+) serves as cofactor.

The catalysed reaction is an S-(2-hydroxyacyl)glutathione + H2O = a 2-hydroxy carboxylate + glutathione + H(+). Its pathway is secondary metabolite metabolism; methylglyoxal degradation; (R)-lactate from methylglyoxal: step 2/2. In terms of biological role, thiolesterase that catalyzes the hydrolysis of S-D-lactoyl-glutathione to form glutathione and D-lactic acid. This is Hydroxyacylglutathione hydrolase from Histophilus somni (strain 129Pt) (Haemophilus somnus).